Consider the following 357-residue polypeptide: Membrane-bound lytic murein transglycosylase C (357 aa).

The N-terminal stretch at 1–16 (MKKLLALFVIAPILIS) is a signal peptide. The N-palmitoyl cysteine moiety is linked to residue cysteine 17. Cysteine 17 carries the S-diacylglycerol cysteine lipid modification.

It belongs to the transglycosylase Slt family.

It localises to the cell outer membrane. It carries out the reaction Exolytic cleavage of the (1-&gt;4)-beta-glycosidic linkage between N-acetylmuramic acid (MurNAc) and N-acetylglucosamine (GlcNAc) residues in peptidoglycan, from either the reducing or the non-reducing ends of the peptidoglycan chains, with concomitant formation of a 1,6-anhydrobond in the MurNAc residue.. Its function is as follows. Murein-degrading enzyme. May play a role in recycling of muropeptides during cell elongation and/or cell division. In Photorhabdus laumondii subsp. laumondii (strain DSM 15139 / CIP 105565 / TT01) (Photorhabdus luminescens subsp. laumondii), this protein is Membrane-bound lytic murein transglycosylase C.